The chain runs to 406 residues: Glutamyl-tRNA reductase (406 aa).

Residues 49–52, serine 107, 112–114, and glutamine 118 each bind substrate; these read TCHR and EPQ. Cysteine 50 acts as the Nucleophile in catalysis. 187 to 192 is a binding site for NADP(+); sequence GAGETG.

It belongs to the glutamyl-tRNA reductase family. In terms of assembly, homodimer.

The enzyme catalyses (S)-4-amino-5-oxopentanoate + tRNA(Glu) + NADP(+) = L-glutamyl-tRNA(Glu) + NADPH + H(+). It functions in the pathway porphyrin-containing compound metabolism; protoporphyrin-IX biosynthesis; 5-aminolevulinate from L-glutamyl-tRNA(Glu): step 1/2. In terms of biological role, catalyzes the NADPH-dependent reduction of glutamyl-tRNA(Glu) to glutamate 1-semialdehyde (GSA). The sequence is that of Glutamyl-tRNA reductase from Thermomicrobium roseum (strain ATCC 27502 / DSM 5159 / P-2).